The following is a 355-amino-acid chain: MKKIIILLTTFFLLSGCTIPRAVFKSSLINQDDPRYNLVEVTPTLKLSAPDTVPKTIVDPVFAANNWHWTSLAKGDVLHITILSSGGAGYLSNNASGDRADFENILVTDSNTVQVPYAGTIPVSGLDVTQLADEIKKRLSRVVLNPQVIVTLTARTGAMVTVEGSGKTGRYPLEQSMNRLSHLLATAVAVENTSTDMMEVHVTRQQHYFTARLSDIYQYPGLDIALQPDDRITLRQVTEYVNVLGAAGVQGKHALVQRHSSVVDALALAKGLNDNLADPQAIFLYKHNEAEQAKQQMRKLNIYHVDMSQPNSVFLAQAIRVDNGDVIYISNASLTDFAKVKAAFDSFLTRGTNSF.

An N-terminal signal peptide occupies residues 1–16; it reads MKKIIILLTTFFLLSG. A lipid anchor (N-palmitoyl cysteine) is attached at C17. C17 is lipidated: S-diacylglycerol cysteine.

The protein belongs to the BexD/CtrA/VexA family.

It localises to the cell outer membrane. May form an ATP-driven capsule polysaccharide export apparatus, in association with the VexB, VexC and VexD proteins. May function as a membrane anchor for the polysaccharide. Possible porin properties. The chain is Vi polysaccharide export protein VexA/TviF (vexA) from Salmonella typhi.